The following is a 405-amino-acid chain: FK506-binding protein 4 (405 aa).

Disordered stretches follow at residues 49 to 117 (THNP…EDEL) and 164 to 297 (QQDE…PQKK). 3 stretches are compositionally biased toward acidic residues: residues 59 to 84 (ESDDEWSDEDEDEEILSEEDDGEMEV), 98 to 117 (VEEEDSEEEDEDESDFEDEL), and 165 to 201 (QDEDSDDESDSDFDGEDDYSELYGSDDDLELDSEEEA). Basic and acidic residues-rich tracts occupy residues 238–252 (RKAEELESPAKEDAA) and 265–276 (AKVEGEKAEEKP). Positions 319-405 (GKRLGMRYIG…KFDVKLVSIN (87 aa)) constitute a PPIase FKBP-type domain.

This sequence belongs to the FKBP-type PPIase family. FKBP3/4 subfamily. In terms of assembly, binds to histones H3 and H4.

The protein resides in the nucleus. It carries out the reaction [protein]-peptidylproline (omega=180) = [protein]-peptidylproline (omega=0). Inhibited by both FK506 and rapamycin. In terms of biological role, PPIase that acts as a histone chaperone. Histone proline isomerase that increases the rate of cis-trans isomerization at prolines on the histone H3 N-terminal tail. Proline isomerization influences H3 methylation thereby regulating gene expression. The protein is FK506-binding protein 4 (FPR4) of Cryptococcus neoformans var. neoformans serotype D (strain B-3501A) (Filobasidiella neoformans).